The sequence spans 123 residues: Undecaprenol kinase (123 aa).

Over 1-33 the chain is Cytoplasmic; sequence MDSKDHRNELNRFFKSFVHAGRGIWETARTERN. A helical membrane pass occupies residues 34–51; that stretch reads FQFHAAAACAVLICGFLV. Residues 52 to 57 are Extracellular-facing; sequence ELSIIE. A helical membrane pass occupies residues 58–74; it reads WMIIFLLIGGMFSLELL. Residues 75 to 99 lie on the Cytoplasmic side of the membrane; the sequence is NTAIEHTVDLITDKHHPLAKAAKDA. Residues 100-120 traverse the membrane as a helical segment; that stretch reads AAGAVCVFAVISCIIGLLIFL. At 121–123 the chain is on the extracellular side; the sequence is PKL.

Belongs to the bacterial diacylglycerol kinase family.

The protein resides in the cell membrane. The catalysed reaction is di-trans,octa-cis-undecaprenol + ATP = di-trans,octa-cis-undecaprenyl phosphate + ADP + H(+). In terms of biological role, catalyzes the phosphorylation of undecaprenol in vitro, which is probably the physiological substrate. Exhibits no detectable activity against other substrates such as monoacylglycerol, ceramide, or diacylglycerol (DAG). Appears indispensable for the maintenance of spore stability and viability in B.subtilis. This Bacillus subtilis (strain 168) protein is Undecaprenol kinase (dgkA).